The chain runs to 895 residues: Protein translocase subunit SecA (895 aa).

ATP is bound by residues Q86, 104–108, and D494; that span reads GEGKT. Composition is skewed to low complexity over residues 838–849 and 870–882; these read AAATPPGFGAPP and GDAA…TGNR. The segment at 838-895 is disordered; it reads AAATPPGFGAPPVRQQLQYSAPTAEGDVEVHAGDAAATDADTGNRAQRRANQRQQREV.

Belongs to the SecA family. In terms of assembly, monomer and homodimer. Part of the essential Sec protein translocation apparatus which comprises SecA, SecYEG and auxiliary proteins SecDF. Other proteins may also be involved.

It localises to the cell membrane. It is found in the cytoplasm. The enzyme catalyses ATP + H2O + cellular proteinSide 1 = ADP + phosphate + cellular proteinSide 2.. Part of the Sec protein translocase complex. Interacts with the SecYEG preprotein conducting channel. Has a central role in coupling the hydrolysis of ATP to the transfer of proteins into and across the cell membrane, serving as an ATP-driven molecular motor driving the stepwise translocation of polypeptide chains across the membrane. The protein is Protein translocase subunit SecA of Kineococcus radiotolerans (strain ATCC BAA-149 / DSM 14245 / SRS30216).